A 365-amino-acid polypeptide reads, in one-letter code: SWR1 complex subunit 2 (365 aa).

Disordered stretches follow at residues 43–83 (ALKE…NEKE) and 95–147 (PGKT…EGEK). Over residues 48–74 (EHDDEYEAEREVADEFDSDFNDDEPEP) the composition is skewed to acidic residues. Residues 99 to 108 (ASKKKKKKTK) are compositionally biased toward basic residues. The segment covering 118–132 (GDEKPGEELGNKEQE) has biased composition (basic and acidic residues). 2 coiled-coil regions span residues 123 to 150 (GEEL…KVIR) and 184 to 225 (GEEK…KAIV). Acidic residues predominate over residues 133 to 144 (EKEENEAQEDME). The interval 333–365 (RTKIPKSNKSFSLRSSARFLSSESEEESEEDSD) is disordered. Over residues 342–354 (SFSLRSSARFLSS) the composition is skewed to low complexity. Acidic residues predominate over residues 355–365 (ESEEESEEDSD).

This sequence belongs to the VPS72/YL1 family. As to quaternary structure, component of the SWR1 chromatin-remodeling complex composed of at least ARP6/ESD1/SUF3, PIE1, SWC6, SWC2 and H2AZs (HTA8, HTA9, HTA11). Interacts directly with SWC6 and H2AZs, but not with ARP6.

Component of the SWR1 complex which mediates the ATP-dependent exchange of histone H2A for the H2A variant H2A.F/Z leading to transcriptional regulation of selected genes (e.g. FLC) by chromatin remodeling. The chain is SWR1 complex subunit 2 (SWC2) from Arabidopsis thaliana (Mouse-ear cress).